The chain runs to 177 residues: Adenine phosphoribosyltransferase (177 aa).

Belongs to the purine/pyrimidine phosphoribosyltransferase family. In terms of assembly, homodimer.

It is found in the cytoplasm. It catalyses the reaction AMP + diphosphate = 5-phospho-alpha-D-ribose 1-diphosphate + adenine. It participates in purine metabolism; AMP biosynthesis via salvage pathway; AMP from adenine: step 1/1. Its function is as follows. Catalyzes a salvage reaction resulting in the formation of AMP, that is energically less costly than de novo synthesis. The chain is Adenine phosphoribosyltransferase from Chlorobium limicola (strain DSM 245 / NBRC 103803 / 6330).